The primary structure comprises 1370 residues: Putative surface protein SA2285 (1370 aa).

Residues 1-50 (MRDKKGPVNKRVDFLSNKLNKYSIRKFTVGTASILIGSLMYLGTQQEAEA) form the signal peptide. Disordered stretches follow at residues 77-116 (NKDT…EDTP), 439-472 (KFNP…NPLT), and 495-1344 (EYGP…TGLE). Basic and acidic residues-rich tracts occupy residues 96-116 (DTIE…EDTP), 450-460 (KVTREGQKGEK), 504-522 (GHRD…EEVP), 553-569 (SIVE…RKFN), 578-588 (KVTREGQKGEK), 605-618 (SKGE…KDPI), 632-650 (GHRD…EEVP), 681-697 (SIVE…RKFN), 706-716 (KVTREGQKGEK), 733-746 (SKGE…KDPI), 760-778 (GHRD…EEVP), 809-825 (SIVE…RKFN), 834-844 (KVTREGQKGEK), 861-874 (SKGE…KDPI), 888-906 (GHRD…EEVP), 937-953 (SIVE…RKFN), 962-972 (KVTREGQKGEK), 989-1002 (SKGE…KDPI), 1016-1034 (GHRD…EEVP), 1065-1081 (SIVE…RKFN), 1090-1100 (KVTREGQKGEK), 1117-1130 (SKGE…KDPV), 1174-1185 (KVIEEPVDDVIK), and 1202-1221 (FETK…RVKQ). Residues 418-500 (SAKNNNRIRK…NELTEYGPET (83 aa)) enclose the G5 1 domain. The G5 2 domain occupies 546–628 (YGPVKGDSIV…NELTEYGPET (83 aa)). Residues 674–756 (YGPVKGDSIV…NELTEYGPET (83 aa)) enclose the G5 3 domain. Residues 802 to 884 (YGPVKGDSIV…NELTEYGPET (83 aa)) enclose the G5 4 domain. The region spanning 930 to 1012 (YGPVKGDSIV…NELTEYGPET (83 aa)) is the G5 5 domain. The 83-residue stretch at 1058 to 1140 (YGPVKGDSIV…NELTEFGGEK (83 aa)) folds into the G5 6 domain. The G5 7 domain occupies 1186–1268 (HGPKTGTPET…DKIVEFGGEK (83 aa)). The segment covering 1224–1238 (QPGSKTITTPITVNP) has biased composition (polar residues). Basic and acidic residues predominate over residues 1252 to 1282 (EITKQPVDKIVEFGGEKPKDPKGPENPEKPS). Residues 1338-1342 (LPKTG) carry the LPXTG sorting signal motif. Threonine 1341 carries the post-translational modification Pentaglycyl murein peptidoglycan amidated threonine. The propeptide at 1342–1370 (GLESTQKGLIFSSIIGIAGLMLLARRRKN) is removed by sortase.

It is found in the secreted. The protein localises to the cell wall. This chain is Putative surface protein SA2285, found in Staphylococcus aureus (strain N315).